The primary structure comprises 223 residues: 2-C-methyl-D-erythritol 4-phosphate cytidylyltransferase (223 aa).

Belongs to the IspD/TarI cytidylyltransferase family. IspD subfamily.

It catalyses the reaction 2-C-methyl-D-erythritol 4-phosphate + CTP + H(+) = 4-CDP-2-C-methyl-D-erythritol + diphosphate. The protein operates within isoprenoid biosynthesis; isopentenyl diphosphate biosynthesis via DXP pathway; isopentenyl diphosphate from 1-deoxy-D-xylulose 5-phosphate: step 2/6. In terms of biological role, catalyzes the formation of 4-diphosphocytidyl-2-C-methyl-D-erythritol from CTP and 2-C-methyl-D-erythritol 4-phosphate (MEP). In Prochlorococcus marinus (strain MIT 9515), this protein is 2-C-methyl-D-erythritol 4-phosphate cytidylyltransferase.